A 66-amino-acid polypeptide reads, in one-letter code: Toxin Tppa2 (66 aa).

Positions 1–63 (KDGYLVGNDG…TWSRATNKCG (63 aa)) constitute an LCN-type CS-alpha/beta domain. 4 disulfide bridges follow: cysteine 11-cysteine 62, cysteine 15-cysteine 37, cysteine 23-cysteine 43, and cysteine 27-cysteine 45. Cysteine 62 carries the post-translational modification Cysteine amide.

It belongs to the long (4 C-C) scorpion toxin superfamily. Sodium channel inhibitor family. Beta subfamily. Expressed by the venom gland.

The protein resides in the secreted. Its function is as follows. Beta toxins bind voltage-independently at site-4 of sodium channels (Nav) and shift the voltage of activation toward more negative potentials thereby affecting sodium channel activation and promoting spontaneous and repetitive firing. The sequence is that of Toxin Tppa2 from Tityus pachyurus (Colombian scorpion).